Consider the following 148-residue polypeptide: SPbeta prophage-derived disulfide bond formation protein B (148 aa).

A helical membrane pass occupies residues 7 to 26 (KSFFLLLFFLSFFGTMASLF). Cysteines 36 and 39 form a disulfide. Helical transmembrane passes span 41–60 (YQRI…LLKK) and 67–84 (YVVF…YHYI). An intrachain disulfide couples Cys95 to Cys102. A helical membrane pass occupies residues 111–135 (GFITLPLMSSVCFALIFGIGLKLII).

This sequence belongs to the DsbB family. BdbC subfamily.

It is found in the cell membrane. Functionally, important but not absolutely essential for the production of the lantibiotic sublancin 168, it may also be required for the stability of other secreted proteins. Not required for competence for DNA uptake. This chain is SPbeta prophage-derived disulfide bond formation protein B (bdbB), found in Bacillus subtilis (strain 168).